The following is a 606-amino-acid chain: Scavenger receptor class A member 3 (606 aa).

At 1–56 (MKVRSAGSDRDVLCVTEEDLAGEDEDMPSFPCTQEGRAGPRCNRCQKNLSLHTSVR) the chain is on the cytoplasmic side. Residues 57–77 (ILYLFLTLLLVAVAVLASLVF) traverse the membrane as a helical; Signal-anchor for type II membrane protein segment. Topologically, residues 78 to 606 (RKVDSLSEDI…PGPPGNQSPY (529 aa)) are extracellular. Asn-115, Asn-182, Asn-224, Asn-257, Asn-313, Asn-337, Asn-365, Asn-400, Asn-430, and Asn-451 each carry an N-linked (GlcNAc...) asparagine glycan. The tract at residues 455–606 (IRGVPGPPGP…PGPPGNQSPY (152 aa)) is disordered. Collagen-like domains follow at residues 456–558 (RGVP…PGPS) and 559–601 (GPQG…GPPG). Over residues 497 to 516 (PQGQPGEPGPVGERGPAGPR) the composition is skewed to low complexity. Positions 526–535 (GSFGTGGPRG) are enriched in gly residues. 2 stretches are compositionally biased toward pro residues: residues 548-558 (PEGPPGSPGPS) and 591-606 (PGLP…QSPY).

It localises to the endoplasmic reticulum membrane. The protein resides in the golgi apparatus membrane. Functionally, seems to protect cells by scavenging oxidative molecules or harmful products of oxidation. The chain is Scavenger receptor class A member 3 (Scara3) from Mus musculus (Mouse).